The sequence spans 372 residues: N-acetyllactosaminide beta-1,3-N-acetylglucosaminyltransferase 3 (372 aa).

The Cytoplasmic segment spans residues 1-10 (MKYLRHRRPN). Residues 11–31 (ATLILAIGAFTLLLFSLLVSP) traverse the membrane as a helical; Signal-anchor for type II membrane protein segment. Topologically, residues 32 to 372 (PTCKVQEQPP…LTCGNQTQIY (341 aa)) are lumenal. N64, N184, N202, N362, and N367 each carry an N-linked (GlcNAc...) asparagine glycan.

It belongs to the glycosyltransferase 31 family. As to expression, expressed in colon, jejunum, stomach, esophagus, placenta and trachea.

It is found in the golgi apparatus membrane. The enzyme catalyses a 3-O-{beta-D-galactosyl-(1-&gt;3)-[N-acetyl-beta-D-glucosaminyl-(1-&gt;6)]-N-acetyl-alpha-D-galactosaminyl}-L-threonyl-[protein] + UDP-N-acetyl-alpha-D-glucosamine = 3-O-{beta-D-GlcNAc-(1-&gt;3)-beta-D-Gal-(1-&gt;3)-[beta-D-GlcNAc-(1-&gt;6)]-alpha-D-GalNAc}-L-threonyl-[protein] + UDP + H(+). It catalyses the reaction 3-O-{beta-D-galactosyl-(1-&gt;3)-[N-acetyl-beta-D-glucosaminyl-(1-&gt;6)]-N-acetyl-alpha-D-galactosaminyl}-L-seryl-[protein] + UDP-N-acetyl-alpha-D-glucosamine = 3-O-{beta-D-GlcNAc-(1-&gt;3)-beta-D-Gal-(1-&gt;3)-[beta-D-GlcNAc-(1-&gt;6)]-alpha-D-GalNAc}-L-seryl-[protein] + UDP + H(+). The catalysed reaction is a beta-D-galactosyl-(1-&gt;4)-N-acetyl-beta-D-glucosaminyl derivative + UDP-N-acetyl-alpha-D-glucosamine = an N-acetyl-beta-D-glucosaminyl-(1-&gt;3)-beta-D-galactosyl-(1-&gt;4)-N-acetyl-beta-D-glucosaminyl derivative + UDP + H(+). The protein operates within protein modification; protein glycosylation. Beta-1,3-N-acetylglucosaminyltransferase involved in the synthesis of poly-N-acetyllactosamine. Has activity for type 2 oligosaccharides. Also acts as a core1-1,3-N-acetylglucosaminyltransferase (Core1-beta3GlcNAcT) to form the 6-sulfo sialyl Lewis x on extended core1 O-glycans. The polypeptide is N-acetyllactosaminide beta-1,3-N-acetylglucosaminyltransferase 3 (B3GNT3) (Homo sapiens (Human)).